The sequence spans 505 residues: Forkhead box protein O4 (505 aa).

Polar residues predominate over residues 1–10 (MDPGNENSAT). Disordered regions lie at residues 1 to 100 (MDPG…RRNA) and 176 to 246 (SWWM…CSRN). Thr32 is modified (phosphothreonine; by PKB/AKT1). The span at 54–64 (LGEKVHTEGRS) shows a compositional bias: basic and acidic residues. Positions 100 to 188 (AWGNQSYAEL…MLNPEGGKSG (89 aa)) form a DNA-binding region, fork-head. Position 197 is a phosphoserine; by PKB/AKT1 (Ser197). Basic residues predominate over residues 205–216 (LRGRSKAPKKKP). Residue Ser262 is modified to Phosphoserine; by PKB/AKT1.

As to quaternary structure, interacts with CREBBP/CBP, CTNNB1, MYOCD, SIRT1, SRF and YWHAZ. Acetylated by CREBBP/CBP and deacetylated by SIRT1. Binding of YWHAZ inhibits DNA-binding. Interacts with USP7; the interaction is enhanced in presence of hydrogen peroxide and occurs independently of TP53. Interacts with NLK, and this inhibits monoubiquitination and transcriptional activity. Interacts with FOXK1; the interaction inhibits MEF2C transactivation activity. In terms of processing, acetylation by CREBBP/CBP, which is induced by peroxidase stress, inhibits transcriptional activity. Deacetylation by SIRT1 is NAD-dependent and stimulates transcriptional activity. Post-translationally, phosphorylation by PKB/AKT1 inhibits transcriptional activity and is responsible for cytoplasmic localization. May be phosphorylated at multiple sites by NLK. Monoubiquitinated; monoubiquitination is induced by oxidative stress and reduced by deacetylase inhibitors; results in its relocalization to the nucleus and its increased transcriptional activity. Deubiquitinated by USP7; deubiquitination is induced by oxidative stress; enhances its interaction with USP7 and consequently, deubiquitination; increases its translocation to the cytoplasm and inhibits its transcriptional activity. Hydrogene-peroxide-induced ubiquitination and USP7-mediated deubiquitination have no major effect on its protein stability. As to expression, heart, brain, placenta, lung, liver, skeletal muscle, kidney and pancreas. Isoform zeta is most abundant in the liver, kidney, and pancreas.

The protein resides in the cytoplasm. It localises to the nucleus. Transcription factor involved in the regulation of the insulin signaling pathway. Binds to insulin-response elements (IREs) and can activate transcription of IGFBP1. Down-regulates expression of HIF1A and suppresses hypoxia-induced transcriptional activation of HIF1A-modulated genes. Also involved in negative regulation of the cell cycle. Involved in increased proteasome activity in embryonic stem cells (ESCs) by activating expression of PSMD11 in ESCs, leading to enhanced assembly of the 26S proteasome, followed by higher proteasome activity. The sequence is that of Forkhead box protein O4 (FOXO4) from Homo sapiens (Human).